The sequence spans 351 residues: Uroporphyrinogen decarboxylase (351 aa).

Residues arginine 27–arginine 31, aspartate 77, tyrosine 154, threonine 209, and histidine 327 contribute to the substrate site.

This sequence belongs to the uroporphyrinogen decarboxylase family. Homodimer.

It localises to the cytoplasm. It carries out the reaction uroporphyrinogen III + 4 H(+) = coproporphyrinogen III + 4 CO2. The protein operates within porphyrin-containing compound metabolism; protoporphyrin-IX biosynthesis; coproporphyrinogen-III from 5-aminolevulinate: step 4/4. Functionally, catalyzes the decarboxylation of four acetate groups of uroporphyrinogen-III to yield coproporphyrinogen-III. The sequence is that of Uroporphyrinogen decarboxylase from Thioalkalivibrio sulfidiphilus (strain HL-EbGR7).